A 150-amino-acid chain; its full sequence is Macrodomain Ter protein (150 aa).

Belongs to the MatP family. As to quaternary structure, homodimer.

The protein localises to the cytoplasm. Required for spatial organization of the terminus region of the chromosome (Ter macrodomain) during the cell cycle. Prevents early segregation of duplicated Ter macrodomains during cell division. Binds specifically to matS, which is a 13 bp signature motif repeated within the Ter macrodomain. The polypeptide is Macrodomain Ter protein (Shigella dysenteriae serotype 1 (strain Sd197)).